The primary structure comprises 318 residues: Ribosomal RNA small subunit methyltransferase H (318 aa).

Residues 35–37, Asp-54, Phe-83, Asp-104, and Gln-111 each bind S-adenosyl-L-methionine; that span reads GGH.

Belongs to the methyltransferase superfamily. RsmH family.

The protein localises to the cytoplasm. It catalyses the reaction cytidine(1402) in 16S rRNA + S-adenosyl-L-methionine = N(4)-methylcytidine(1402) in 16S rRNA + S-adenosyl-L-homocysteine + H(+). Specifically methylates the N4 position of cytidine in position 1402 (C1402) of 16S rRNA. In Latilactobacillus sakei subsp. sakei (strain 23K) (Lactobacillus sakei subsp. sakei), this protein is Ribosomal RNA small subunit methyltransferase H.